The sequence spans 93 residues: Small ribosomal subunit protein uS19 (93 aa).

This sequence belongs to the universal ribosomal protein uS19 family.

In terms of biological role, protein S19 forms a complex with S13 that binds strongly to the 16S ribosomal RNA. The sequence is that of Small ribosomal subunit protein uS19 from Salinispora tropica (strain ATCC BAA-916 / DSM 44818 / JCM 13857 / NBRC 105044 / CNB-440).